A 376-amino-acid chain; its full sequence is MRSYTLLALAGPLAVSAASGSGHSTRYWDCCKPSCSWSGKAAVNAPALTCDKNDNPISNTNAVNGCEGGGSAYACTNYSPWAVNDELAYGFAATKISGGSEASWCCACYALTFTTGPVKGKKMIVQSTNTGGDLGDNHFDLMMPGGGVGIFDGCTSEFGKALGGAQYGGISSRSECDSYPELLKDGCHWRFDWFENADNPDFTFEQVQCPKALLDISGCKRDDDSSFPAFKGDTSASKPQPSSSAKKTTSAAAAAQPQKTKDSAPVVQKSSTKPAAQPEPTKPADKPQTDKPVATKPAATKPAQPVNKPKTTQKVRGTKTRGSCPAKTDATAKASVVPAYYQCGGSKSAYPNGNLACATGSKCVKQNEYYSQCVPN.

Positions 1–18 (MRSYTLLALAGPLAVSAA) are cleaved as a signal peptide. The interval 19-308 (SGSGHSTRYW…ATKPAQPVNK (290 aa)) is catalytic. The Nucleophile role is filled by D29. D140 acts as the Proton donor in catalysis. The disordered stretch occupies residues 229 to 332 (AFKGDTSASK…SCPAKTDATA (104 aa)). Composition is skewed to low complexity over residues 235 to 258 (SASKPQPSSSAKKTTSAAAAAQPQ) and 291 to 306 (KPVATKPAATKPAQPV). The segment at 309 to 338 (PKTTQKVRGTKTRGSCPAKTDATAKASVVP) is linker. Residues 335-374 (SVVPAYYQCGGSKSAYPNGNLACATGSKCVKQNEYYSQCV) enclose the CBM1 domain.

Belongs to the glycosyl hydrolase 45 (cellulase K) family.

The enzyme catalyses Endohydrolysis of (1-&gt;4)-beta-D-glucosidic linkages in cellulose, lichenin and cereal beta-D-glucans.. This is Putative endoglucanase type K from Fusarium oxysporum (Fusarium vascular wilt).